The chain runs to 158 residues: Cyclic pyranopterin monophosphate synthase (158 aa).

Residues 73–75 and 110–111 contribute to the substrate site; these read LCH and ME. The active site involves Asp125.

The protein belongs to the MoaC family. As to quaternary structure, homohexamer; trimer of dimers.

The enzyme catalyses (8S)-3',8-cyclo-7,8-dihydroguanosine 5'-triphosphate = cyclic pyranopterin phosphate + diphosphate. It functions in the pathway cofactor biosynthesis; molybdopterin biosynthesis. Its function is as follows. Catalyzes the conversion of (8S)-3',8-cyclo-7,8-dihydroguanosine 5'-triphosphate to cyclic pyranopterin monophosphate (cPMP). This Azotobacter vinelandii (strain DJ / ATCC BAA-1303) protein is Cyclic pyranopterin monophosphate synthase.